Reading from the N-terminus, the 296-residue chain is GTPase Era (296 aa).

Residues 7–174 (KCSMNAIVGT…INYLCEISPS (168 aa)) form the Era-type G domain. The G1 stretch occupies residues 15 to 22 (GTTNAGKS). A GTP-binding site is contributed by 15 to 22 (GTTNAGKS). The segment at 41–45 (QTTRV) is G2. A G3 region spans residues 62 to 65 (DTPG). GTP-binding positions include 62–66 (DTPGI) and 124–127 (NKID). Residues 124-127 (NKID) form a G4 region. The interval 153 to 155 (ISA) is G5. The KH type-2 domain occupies 205–282 (LHHELPYSLS…HLFLFVKVRE (78 aa)).

It belongs to the TRAFAC class TrmE-Era-EngA-EngB-Septin-like GTPase superfamily. Era GTPase family. Monomer.

Its subcellular location is the cytoplasm. It localises to the cell inner membrane. An essential GTPase that binds both GDP and GTP, with rapid nucleotide exchange. Plays a role in 16S rRNA processing and 30S ribosomal subunit biogenesis and possibly also in cell cycle regulation and energy metabolism. The sequence is that of GTPase Era from Ehrlichia canis (strain Jake).